Here is a 139-residue protein sequence, read N- to C-terminus: FAD synthase (139 aa).

ATP is bound by residues 8-9 (VF), 13-16 (HPGH), Asp92, and Tyr119.

The protein belongs to the archaeal FAD synthase family. As to quaternary structure, homodimer. Requires a divalent metal cation as cofactor.

It catalyses the reaction FMN + ATP + H(+) = FAD + diphosphate. The protein operates within cofactor biosynthesis; FAD biosynthesis; FAD from FMN: step 1/1. In terms of biological role, catalyzes the transfer of the AMP portion of ATP to flavin mononucleotide (FMN) to produce flavin adenine dinucleotide (FAD) coenzyme. This Picrophilus torridus (strain ATCC 700027 / DSM 9790 / JCM 10055 / NBRC 100828 / KAW 2/3) protein is FAD synthase.